Consider the following 344-residue polypeptide: MDSTKTNNKWAAAGILNSVGKDFVAGSVGGMSSIMAGHPFDTIKVMLQDASGNLPKFKNGFQALKYIMKVDGIKGIYRGLSVPLFSVSFTNSVFFATNNFCQSYFHPPCKDENGEDILIPYHKAAAAGAIAGGVISLLITPRDLVKSKLQVQCRPFGSTNVSLQYKGPIDVIRQTIKRDGIKGMFKGIRSTFCRDIPGDAVYFVVYEFMKRKLLALSKNNNNNNNNNDNNDNSSPKAGVPAWVAIGAGGCAGMSFWMSIYPMDVVKTRIQTQPDHLPPQYTSVLQTITKIYREEGISVFFRGFSATILRAFPTSAVNFLMYETTRNLLNSKDPFYNNNDHYNAE.

Residues 1 to 22 (MDSTKTNNKWAAAGILNSVGKD) are Mitochondrial intermembrane-facing. Solcar repeat units follow at residues 17–104 (NSVG…CQSY), 119–212 (IPYH…MKRK), and 239–327 (VPAW…TRNL). Residues 23–43 (FVAGSVGGMSSIMAGHPFDTI) form a helical membrane-spanning segment. Residues 44–75 (KVMLQDASGNLPKFKNGFQALKYIMKVDGIKG) are Mitochondrial matrix-facing. A helical membrane pass occupies residues 76 to 96 (IYRGLSVPLFSVSFTNSVFFA). The Mitochondrial intermembrane portion of the chain corresponds to 97 to 116 (TNNFCQSYFHPPCKDENGED). The helical transmembrane segment at 117 to 137 (ILIPYHKAAAAGAIAGGVISL) threads the bilayer. Residues 138 to 186 (LITPRDLVKSKLQVQCRPFGSTNVSLQYKGPIDVIRQTIKRDGIKGMFK) lie on the Mitochondrial matrix side of the membrane. The chain crosses the membrane as a helical span at residues 187 to 207 (GIRSTFCRDIPGDAVYFVVYE). Residues 208-238 (FMKRKLLALSKNNNNNNNNNDNNDNSSPKAG) are Mitochondrial intermembrane-facing. The helical transmembrane segment at 239–259 (VPAWVAIGAGGCAGMSFWMSI) threads the bilayer. Residues 260 to 301 (YPMDVVKTRIQTQPDHLPPQYTSVLQTITKIYREEGISVFFR) lie on the Mitochondrial matrix side of the membrane. The helical transmembrane segment at 302 to 321 (GFSATILRAFPTSAVNFLMY) threads the bilayer. The Mitochondrial intermembrane segment spans residues 322-344 (ETTRNLLNSKDPFYNNNDHYNAE).

The protein belongs to the mitochondrial carrier (TC 2.A.29) family.

It is found in the mitochondrion inner membrane. Its function is as follows. Calcium-dependent mitochondrial solute carrier. Mitochondrial solute carriers shuttle metabolites, nucleotides, and cofactors through the mitochondrial inner membrane. The chain is Mitochondrial substrate carrier family protein D (mcfD) from Dictyostelium discoideum (Social amoeba).